Here is a 314-residue protein sequence, read N- to C-terminus: 1,4-dihydroxy-2-naphthoyl-CoA synthase (314 aa).

Residues R58, 103-107 (SGGDQ), Y115, 157-161 (WAAGG), T184, S190, Y287, and K302 contribute to the substrate site.

This sequence belongs to the enoyl-CoA hydratase/isomerase family. MenB subfamily.

It carries out the reaction 2-succinylbenzoyl-CoA + H(+) = 1,4-dihydroxy-2-naphthoyl-CoA + H2O. It participates in quinol/quinone metabolism; 1,4-dihydroxy-2-naphthoate biosynthesis; 1,4-dihydroxy-2-naphthoate from chorismate: step 6/7. The protein operates within quinol/quinone metabolism; menaquinone biosynthesis. Its function is as follows. Converts o-succinylbenzoyl-CoA (OSB-CoA) to 1,4-dihydroxy-2-naphthoyl-CoA (DHNA-CoA). The sequence is that of 1,4-dihydroxy-2-naphthoyl-CoA synthase from Mycobacterium tuberculosis (strain CDC 1551 / Oshkosh).